A 194-amino-acid polypeptide reads, in one-letter code: Large ribosomal subunit protein eL15 (194 aa).

Residues 160–194 (RGLTSAGKKGRGLMYKGKGTEKVRPSVRANSKKAK) are disordered.

This sequence belongs to the eukaryotic ribosomal protein eL15 family.

In Methanococcus maripaludis (strain C7 / ATCC BAA-1331), this protein is Large ribosomal subunit protein eL15.